The chain runs to 266 residues: Probable dihydroorotate dehydrogenase B (NAD(+)), electron transfer subunit (266 aa).

The 95-residue stretch at 5–99 (NVPEVLEIKR…RGPYGRGFEL (95 aa)) folds into the FAD-binding FR-type domain. Cysteine 217, cysteine 222, cysteine 225, and cysteine 235 together coordinate [2Fe-2S] cluster.

The protein belongs to the PyrK family. As to quaternary structure, heterotetramer of 2 PyrK and 2 PyrD type B subunits. [2Fe-2S] cluster is required as a cofactor. It depends on FAD as a cofactor.

It functions in the pathway pyrimidine metabolism; UMP biosynthesis via de novo pathway; orotate from (S)-dihydroorotate (NAD(+) route): step 1/1. Its function is as follows. Responsible for channeling the electrons from the oxidation of dihydroorotate from the FMN redox center in the PyrD type B subunit to the ultimate electron acceptor NAD(+). The chain is Probable dihydroorotate dehydrogenase B (NAD(+)), electron transfer subunit from Methanothermobacter thermautotrophicus (strain ATCC 29096 / DSM 1053 / JCM 10044 / NBRC 100330 / Delta H) (Methanobacterium thermoautotrophicum).